Reading from the N-terminus, the 251-residue chain is Diphthine synthase (251 aa).

Residues leucine 9, aspartate 85, valine 88, 113–114 (SI), leucine 165, alanine 202, and histidine 227 contribute to the S-adenosyl-L-methionine site.

The protein belongs to the diphthine synthase family. As to quaternary structure, homodimer.

The catalysed reaction is 2-[(3S)-amino-3-carboxypropyl]-L-histidyl-[translation elongation factor 2] + 3 S-adenosyl-L-methionine = diphthine-[translation elongation factor 2] + 3 S-adenosyl-L-homocysteine + 3 H(+). The protein operates within protein modification; peptidyl-diphthamide biosynthesis. Its function is as follows. S-adenosyl-L-methionine-dependent methyltransferase that catalyzes the trimethylation of the amino group of the modified target histidine residue in translation elongation factor 2 (EF-2), to form an intermediate called diphthine. The three successive methylation reactions represent the second step of diphthamide biosynthesis. The sequence is that of Diphthine synthase from Methanosphaerula palustris (strain ATCC BAA-1556 / DSM 19958 / E1-9c).